A 329-amino-acid polypeptide reads, in one-letter code: Helicase VP6-A (329 aa).

Disordered stretches follow at residues 28–130 and 189–232; these read NLVD…TNGG and DLRR…SEEP. Composition is skewed to basic and acidic residues over residues 36-58, 65-83, and 96-109; these read EGGKEDKTEPKEESKAEGSKDGE, GQKEEGGKETKDADVDRRI, and SGERANENANRGDG. K110 contributes to the ATP binding site. The span at 110 to 129 shows a compositional bias: gly residues; sequence KVGGGGGDADAGVGATGTNG. 2 stretches are compositionally biased toward basic and acidic residues: residues 189 to 207 and 215 to 232; these read DLRRKEKNGTHAKAVERGG and HGDAQREGVEEEKTSEEP.

It belongs to the reoviruses VP6 family. Homohexamer.

The protein resides in the virion. The enzyme catalyses ATP + H2O = ADP + phosphate + H(+). Its function is as follows. ATP dependent RNA helicase essential for RNA packaging and viral transcription. Possesses ss- and dsRNA-binding capacity. This chain is Helicase VP6-A (Segment-9), found in Bluetongue virus 10 (isolate USA) (BTV 10).